Here is a 609-residue protein sequence, read N- to C-terminus: Chaperone protein DnaK (609 aa).

Thr173 carries the phosphothreonine; by autocatalysis modification. The span at 525-542 shows a compositional bias: basic and acidic residues; that stretch reads ENISDEDKKNAEEKKDAL. Disordered regions lie at residues 525 to 554 and 574 to 609; these read ENISDEDKKNAEEKKDALKTALEGEDIDDI and EQAQQAQQQGQEEQGSQDSTVEDADFKEVKDDEDKK. A compositionally biased stretch (low complexity) spans 574–587; the sequence is EQAQQAQQQGQEEQ. Over residues 597 to 609 the composition is skewed to basic and acidic residues; that stretch reads ADFKEVKDDEDKK.

This sequence belongs to the heat shock protein 70 family.

Acts as a chaperone. The polypeptide is Chaperone protein DnaK (Staphylococcus epidermidis (strain ATCC 35984 / DSM 28319 / BCRC 17069 / CCUG 31568 / BM 3577 / RP62A)).